A 213-amino-acid polypeptide reads, in one-letter code: Cytidylate kinase (213 aa).

7 to 15 (GPAASGKGT) is a binding site for ATP.

This sequence belongs to the cytidylate kinase family. Type 1 subfamily.

It localises to the cytoplasm. It carries out the reaction CMP + ATP = CDP + ADP. The enzyme catalyses dCMP + ATP = dCDP + ADP. The sequence is that of Cytidylate kinase from Rhodospirillum rubrum (strain ATCC 11170 / ATH 1.1.1 / DSM 467 / LMG 4362 / NCIMB 8255 / S1).